The following is a 361-amino-acid chain: uncharacterized protein (361 aa).

ATP is bound at residue 33-40 (GPINSGKT).

The protein belongs to the archaeal ATPase family.

This is an uncharacterized protein from Methanocaldococcus jannaschii (strain ATCC 43067 / DSM 2661 / JAL-1 / JCM 10045 / NBRC 100440) (Methanococcus jannaschii).